The following is a 1047-amino-acid chain: Protein masquerade (1047 aa).

An N-terminal signal peptide occupies residues 1–30 (MPRHSSTMSRLVLPLIFSILLVSKPSPSQA). The tract at residues 54 to 87 (KDCPGVCVHTLATLICYEVLDDVACPSPSMKCCI) is CLIP 1. Cystine bridges form between C56/C85, C60/C78, and C69/C86. N95 is a glycosylation site (N-linked (GlcNAc...) asparagine). Composition is skewed to low complexity over residues 98 to 139 (AVRA…STTP) and 148 to 175 (KRPATSSTTKATVATTKKPSTTKKVATA). A disordered region spans residues 98 to 189 (AVRATTTPKT…KEEATKADDA (92 aa)). Basic and acidic residues predominate over residues 176-189 (KPKDKEEATKADDA). A CLIP 2 region spans residues 192-224 (DCTGVCVADRIAEYCEAYLTSDGLCKEGTKCCV). Cystine bridges form between C193-C222, C197-C216, and C206-C223. N251 carries an N-linked (GlcNAc...) asparagine glycan. The segment at 252–335 (QTLSEKSAPA…PLSNKLKSGQ (84 aa)) is disordered. Low complexity predominate over residues 263–280 (SSSTSTTSTTTTTSTTTT). The N-linked (GlcNAc...) asparagine glycan is linked to N287. Positions 307–325 (AAEEEEEQETEEDGEEEEP) are enriched in acidic residues. Positions 343-374 (ECEGECMNGIFAIFCDDIDSDAFCPGEESCCV) are CLIP 3. 3 disulfides stabilise this stretch: C344/C372, C348/C366, and C357/C373. The segment at 376–428 (GGASEATPSSKAPPTKPAIKHAPKPAAKPARPASPPPAPPSSTSGGGGGGDFL) is disordered. Positions 457 to 492 (RCPGFCLLNIMAAFCERPSVLVSTPTTCAKGSVCCD) are CLIP 4. 3 cysteine pairs are disulfide-bonded: C458–C490, C462–C484, and C471–C491. Positions 498–527 (APKPKLPPPTPSPTASPTAPPYVLPNTPSP) are disordered. The segment covering 501–527 (PKLPPPTPSPTASPTAPPYVLPNTPSP) has biased composition (pro residues). The CLIP 5 stretch occupies residues 532-567 (ECPGSCIVSLLSFTCFKNAEMTDLFRCKRSGQICCA). 3 cysteine pairs are disulfide-bonded: C533–C565, C537–C558, and C546–C566. N-linked (GlcNAc...) asparagine glycosylation occurs at N582. The segment at 583–673 (DTAYYPAPPP…TTTTTTTTPR (91 aa)) is disordered. Pro residues-rich tracts occupy residues 588–606 (PAPPPPPIGPPQAYPPQTP), 613–638 (NPPPQGPPPQMAPHHPNPYQPPPPAP), and 650–661 (GLPPQPQPPMTT). A compositionally biased stretch (low complexity) spans 662–672 (PPTTTTTTTTP). 5 disulfides stabilise this stretch: C682–C916, C829–C845, C930–C1001, C961–C981, and C991–C1019. N-linked (GlcNAc...) asparagine glycans are attached at residues N726 and N794. A peptidase S1 region spans residues 803-1043 (VVGGEDGENG…FIGWINQIIS (241 aa)).

This sequence belongs to the peptidase S1 family. CLIP subfamily. In terms of processing, proteolytically cleaved and thereafter secreted.

Its subcellular location is the secreted. It is found in the cell projection. The protein localises to the axon. Functionally, in embryogenesis, has a role in somatic muscle attachment and in the development of axonal pathways probably by stabilizing cell-matrix adhesion and/or by acting as a competitive antagonist of serine proteases. The protein is Protein masquerade of Drosophila melanogaster (Fruit fly).